Consider the following 310-residue polypeptide: Pantothenate kinase (310 aa).

Position 95 to 102 (95 to 102 (GSVAVGKS)) interacts with ATP.

Belongs to the prokaryotic pantothenate kinase family.

The protein localises to the cytoplasm. It carries out the reaction (R)-pantothenate + ATP = (R)-4'-phosphopantothenate + ADP + H(+). Its pathway is cofactor biosynthesis; coenzyme A biosynthesis; CoA from (R)-pantothenate: step 1/5. In Mycobacteroides abscessus (strain ATCC 19977 / DSM 44196 / CCUG 20993 / CIP 104536 / JCM 13569 / NCTC 13031 / TMC 1543 / L948) (Mycobacterium abscessus), this protein is Pantothenate kinase.